A 289-amino-acid chain; its full sequence is Alpha-soluble NSF attachment protein (289 aa).

The stretch at 112 to 145 is one TPR repeat; it reads GKYYKEIAELYELEQNFEQAIIYFEKAADIYQSE.

This sequence belongs to the SNAP family.

The protein resides in the membrane. Required for vesicular transport between the endoplasmic reticulum and the Golgi apparatus. This Vitis vinifera (Grape) protein is Alpha-soluble NSF attachment protein.